A 1020-amino-acid chain; its full sequence is Sodium/potassium-transporting ATPase subunit alpha-2 (1020 aa).

Positions Met1–Ala5 are excised as a propeptide. The segment at Met1–Asp31 is disordered. The Cytoplasmic portion of the chain corresponds to Gly6–Pro85. Ser10 bears the Phosphoserine mark. The interval Pro80 to Pro82 is interaction with phosphoinositide-3 kinase. The helical transmembrane segment at Glu86 to Ala106 threads the bilayer. The Extracellular segment spans residues Leu107 to Tyr129. The chain crosses the membrane as a helical span at residues Leu130–Ala150. Over Lys151 to Ile286 the chain is Cytoplasmic. Positions Asp212–Pro227 are enriched in polar residues. Residues Asp212 to His231 form a disordered region. Residues Glu287–Val306 traverse the membrane as a helical segment. Residues Leu307–Ala318 are Extracellular-facing. A helical transmembrane segment spans residues Val319–Ala336. Residues Thr337–Leu769 lie on the Cytoplasmic side of the membrane. Asp374 serves as the catalytic 4-aspartylphosphate intermediate. Phosphoserine is present on residues Ser439, Ser450, Ser496, and Ser559. Thr570 carries the post-translational modification Phosphothreonine. Phosphoserine occurs at positions 587 and 672. Asp714 and Asp718 together coordinate Mg(2+). Residues Lys770–Leu789 traverse the membrane as a helical segment. The Extracellular segment spans residues Phe790–Leu799. Residues Gly800–Ala820 traverse the membrane as a helical segment. At Tyr821–Lys840 the chain is on the cytoplasmic side. Ser826 carries the phosphoserine modification. A helical membrane pass occupies residues Leu841–Phe863. At Phe864–Cys915 the chain is on the extracellular side. Residues His916–Lys935 traverse the membrane as a helical segment. At Thr936–Asn948 the chain is on the cytoplasmic side. Phosphoserine; by PKA is present on Ser940. A helical membrane pass occupies residues Lys949–Tyr967. The Extracellular segment spans residues Cys968–Val982. The chain crosses the membrane as a helical span at residues Thr983–Lys1003. Residues Leu1004 to Tyr1020 are Cytoplasmic-facing.

This sequence belongs to the cation transport ATPase (P-type) (TC 3.A.3) family. Type IIC subfamily. As to quaternary structure, the sodium/potassium-transporting ATPase is composed of a catalytic alpha subunit, an auxiliary non-catalytic beta subunit and an additional regulatory subunit. Interacts with regulatory subunit FXYD1.

Its subcellular location is the membrane. It is found in the cell membrane. It catalyses the reaction K(+)(out) + Na(+)(in) + ATP + H2O = K(+)(in) + Na(+)(out) + ADP + phosphate + H(+). Its function is as follows. This is the catalytic component of the active enzyme, which catalyzes the hydrolysis of ATP coupled with the exchange of sodium and potassium ions across the plasma membrane. This action creates the electrochemical gradient of sodium and potassium ions, providing the energy for active transport of various nutrients. This chain is Sodium/potassium-transporting ATPase subunit alpha-2 (Atp1a2), found in Mus musculus (Mouse).